A 178-amino-acid polypeptide reads, in one-letter code: UPF0302 protein Bcer98_1244 (178 aa).

This sequence belongs to the UPF0302 family.

The protein is UPF0302 protein Bcer98_1244 of Bacillus cytotoxicus (strain DSM 22905 / CIP 110041 / 391-98 / NVH 391-98).